The chain runs to 140 residues: Large-conductance mechanosensitive channel (140 aa).

Transmembrane regions (helical) follow at residues 21–41 (VGVI…GDVI) and 82–102 (GSFI…FMMI).

It belongs to the MscL family. As to quaternary structure, homopentamer.

Its subcellular location is the cell inner membrane. Functionally, channel that opens in response to stretch forces in the membrane lipid bilayer. May participate in the regulation of osmotic pressure changes within the cell. The sequence is that of Large-conductance mechanosensitive channel from Leptothrix cholodnii (strain ATCC 51168 / LMG 8142 / SP-6) (Leptothrix discophora (strain SP-6)).